Reading from the N-terminus, the 276-residue chain is Diaminopimelate epimerase (276 aa).

Positions 13, 46, and 66 each coordinate substrate. The Proton donor role is filled by C75. Residues 76–77, N159, N192, and 210–211 contribute to the substrate site; these read GN and ER. Residue C219 is the Proton acceptor of the active site. 220 to 221 contributes to the substrate binding site; sequence GT.

It belongs to the diaminopimelate epimerase family. Homodimer.

It is found in the cytoplasm. The enzyme catalyses (2S,6S)-2,6-diaminopimelate = meso-2,6-diaminopimelate. It functions in the pathway amino-acid biosynthesis; L-lysine biosynthesis via DAP pathway; DL-2,6-diaminopimelate from LL-2,6-diaminopimelate: step 1/1. In terms of biological role, catalyzes the stereoinversion of LL-2,6-diaminopimelate (L,L-DAP) to meso-diaminopimelate (meso-DAP), a precursor of L-lysine and an essential component of the bacterial peptidoglycan. This chain is Diaminopimelate epimerase, found in Pseudomonas aeruginosa (strain UCBPP-PA14).